Reading from the N-terminus, the 617-residue chain is Na(+)/H(+) antiporter NhaA 1 (617 aa).

Residues 1-26 are disordered; that stretch reads MTVTEPATQRGFPLLPSRLSRGSKAT. Positions 1 to 433 are na(+)/H(+) antiporter NhaA; it reads MTVTEPATQR…GWAIFRITDW (433 aa). 11 consecutive transmembrane segments (helical) span residues 33 to 53, 75 to 95, 113 to 133, 141 to 161, 171 to 191, 198 to 218, 234 to 254, 304 to 324, 341 to 361, 378 to 398, and 411 to 431; these read AAALLLTFTVVAILWANSPWA, MTVKHVVNDALMTFFFFIVGL, AVPVVAAAAGLILPAVVFLAF, HAWGVVISTDTAFLVGALAII, LFLLTLAVVDDVGALIAIAVL, VAPLVVAVALLGALALVRYLP, IALYLAGIHPTLAGVAVALLI, VSPVVSFVILPLFALVNAGVL, GIVAGLVVGKFVGIAGATWLI, IAGGAALSGIGFTISLFIVDI, and IGVLAASVLAFALGWAIFRIT. One can recognise a Thioredoxin domain in the interval 434 to 617; sequence LSPPEPVGLK…LIRALEAGRG (184 aa).

This sequence in the N-terminal section; belongs to the NhaA Na(+)/H(+) (TC 2.A.33) antiporter family.

It is found in the cell membrane. The catalysed reaction is Na(+)(in) + 2 H(+)(out) = Na(+)(out) + 2 H(+)(in). Its function is as follows. Na(+)/H(+) antiporter that extrudes sodium in exchange for external protons. In Mycolicibacterium gilvum (strain PYR-GCK) (Mycobacterium gilvum (strain PYR-GCK)), this protein is Na(+)/H(+) antiporter NhaA 1.